The following is a 155-amino-acid chain: Cyanate hydratase (155 aa).

Residues Arg-95, Glu-98, and Ser-121 contribute to the active site.

It belongs to the cyanase family.

The catalysed reaction is cyanate + hydrogencarbonate + 3 H(+) = NH4(+) + 2 CO2. Catalyzes the reaction of cyanate with bicarbonate to produce ammonia and carbon dioxide. This is Cyanate hydratase from Pseudomonas syringae pv. tomato (strain ATCC BAA-871 / DC3000).